We begin with the raw amino-acid sequence, 119 residues long: Large ribosomal subunit protein bL19c (119 aa).

It belongs to the bacterial ribosomal protein bL19 family.

It is found in the plastid. Its subcellular location is the chloroplast. In Mesostigma viride (Green alga), this protein is Large ribosomal subunit protein bL19c.